The primary structure comprises 101 residues: NADH-quinone oxidoreductase subunit K (101 aa).

Transmembrane regions (helical) follow at residues 4–24 (LSDY…GIFV), 29–49 (IITL…NFVA), and 61–81 (IFVF…LAIL).

Belongs to the complex I subunit 4L family. As to quaternary structure, NDH-1 is composed of 14 different subunits. Subunits NuoA, H, J, K, L, M, N constitute the membrane sector of the complex.

Its subcellular location is the cell inner membrane. It catalyses the reaction a quinone + NADH + 5 H(+)(in) = a quinol + NAD(+) + 4 H(+)(out). Functionally, NDH-1 shuttles electrons from NADH, via FMN and iron-sulfur (Fe-S) centers, to quinones in the respiratory chain. The immediate electron acceptor for the enzyme in this species is believed to be ubiquinone. Couples the redox reaction to proton translocation (for every two electrons transferred, four hydrogen ions are translocated across the cytoplasmic membrane), and thus conserves the redox energy in a proton gradient. The polypeptide is NADH-quinone oxidoreductase subunit K (Ruthia magnifica subsp. Calyptogena magnifica).